A 187-amino-acid chain; its full sequence is UPF0301 protein YqgE (187 aa).

This sequence belongs to the UPF0301 (AlgH) family.

The chain is UPF0301 protein YqgE from Shigella boydii serotype 4 (strain Sb227).